The sequence spans 350 residues: Ribosome production factor 2 homolog (350 aa).

The Brix domain maps to 28–266 (KTCLFLRGTT…LGRMREPDPA (239 aa)). Residues 192 to 202 (PTSSTSTNNDG) show a composition bias toward polar residues. Disordered stretches follow at residues 192 to 219 (PTSS…SIDP) and 301 to 350 (MGKT…KVKG).

This sequence belongs to the RPF2 family. Component of a hexameric 5S RNP precursor complex, composed of 5S RNA, RRS1, RPF2, RPL5, RPL11 and SYO1; this complex acts as a precursor for ribosome assembly.

Its subcellular location is the nucleus. It is found in the nucleolus. Its function is as follows. Involved in ribosomal large subunit assembly. The sequence is that of Ribosome production factor 2 homolog from Chaetomium thermophilum (strain DSM 1495 / CBS 144.50 / IMI 039719) (Thermochaetoides thermophila).